The primary structure comprises 401 residues: NADH-quinone oxidoreductase subunit D 2 (401 aa).

It belongs to the complex I 49 kDa subunit family. In terms of assembly, NDH-1 is composed of 14 different subunits. Subunits NuoB, C, D, E, F, and G constitute the peripheral sector of the complex.

The protein resides in the cell inner membrane. The catalysed reaction is a quinone + NADH + 5 H(+)(in) = a quinol + NAD(+) + 4 H(+)(out). Its function is as follows. NDH-1 shuttles electrons from NADH, via FMN and iron-sulfur (Fe-S) centers, to quinones in the respiratory chain. The immediate electron acceptor for the enzyme in this species is believed to be ubiquinone. Couples the redox reaction to proton translocation (for every two electrons transferred, four hydrogen ions are translocated across the cytoplasmic membrane), and thus conserves the redox energy in a proton gradient. This chain is NADH-quinone oxidoreductase subunit D 2, found in Koribacter versatilis (strain Ellin345).